Consider the following 370-residue polypeptide: Gametogenetin-binding protein 1 (370 aa).

Disordered regions lie at residues 26–114 (VGSK…QTLT) and 240–263 (PAAP…EEAV). Over residues 31–49 (GSKSTNKPLTRSQPSSSWE) the composition is skewed to polar residues. A required for induction of mitochondrial fragmentation region spans residues 225 to 370 (LYKQLQKSAM…DEMGNWPPPD (146 aa)). The segment covering 250–260 (GLPHEEKGERE) has biased composition (basic and acidic residues). Residues 298 to 370 (KKFRSTDTVG…DEMGNWPPPD (73 aa)) are interaction with GGN.

In terms of assembly, interacts with CCDC159. Interacts with isoform 1 and isoform 2 of GGN. As to expression, testis-specific. In the testis, expressed only in germ cells and not in somatic cells. Expression starts in late primary spermatocytes in stage X-XII tubules and gradually increases towards step 1-3 spermatids in stage I-III tubules. Expression then declines continuously and disappears after step 7 spermatids in stage VII tubules (at protein level).

The protein resides in the cytoplasm. It localises to the membrane. Its subcellular location is the golgi apparatus. The protein localises to the mitochondrion intermembrane space. In terms of biological role, induces mitochondrial fragmentation, possibly by promoting DNM1L-dependent fission and may play a role in mitochondrial morphogenesis during spermatogenesis. This Mus musculus (Mouse) protein is Gametogenetin-binding protein 1 (Ggnbp1).